The sequence spans 118 residues: Large ribosomal subunit protein uL18 (118 aa).

This sequence belongs to the universal ribosomal protein uL18 family. Part of the 50S ribosomal subunit; part of the 5S rRNA/L5/L18/L25 subcomplex. Contacts the 5S and 23S rRNAs.

In terms of biological role, this is one of the proteins that bind and probably mediate the attachment of the 5S RNA into the large ribosomal subunit, where it forms part of the central protuberance. This is Large ribosomal subunit protein uL18 from Campylobacter hominis (strain ATCC BAA-381 / DSM 21671 / CCUG 45161 / LMG 19568 / NCTC 13146 / CH001A).